We begin with the raw amino-acid sequence, 169 residues long: Protein Flattop homolog (169 aa).

The interval 53–169 is disordered; that stretch reads IPRSSRSPWG…SPKLATPEPC (117 aa). Over residues 119–130 the composition is skewed to polar residues; sequence VQASPRNASPLQ.

It belongs to the Flattop family.

Its subcellular location is the cytoplasm. The protein resides in the cytoskeleton. It is found in the cilium basal body. It localises to the cell projection. The protein localises to the cilium. Its subcellular location is the apical cell membrane. Acts as a regulator of cilium basal body docking and positioning in mono- and multiciliated cells. The polypeptide is Protein Flattop homolog (Nematostella vectensis (Starlet sea anemone)).